The chain runs to 212 residues: Large ribosomal subunit protein bL25 (212 aa).

Residues Met-1 to Leu-25 are disordered. Positions Lys-13–Arg-24 are enriched in basic and acidic residues.

The protein belongs to the bacterial ribosomal protein bL25 family. CTC subfamily. As to quaternary structure, part of the 50S ribosomal subunit; part of the 5S rRNA/L5/L18/L25 subcomplex. Contacts the 5S rRNA. Binds to the 5S rRNA independently of L5 and L18.

Functionally, this is one of the proteins that binds to the 5S RNA in the ribosome where it forms part of the central protuberance. This is Large ribosomal subunit protein bL25 from Leptospira borgpetersenii serovar Hardjo-bovis (strain L550).